Here is a 271-residue protein sequence, read N- to C-terminus: Phosphoribosylformylglycinamidine synthase subunit PurQ (271 aa).

A Glutamine amidotransferase type-1 domain is found at K7–G253. The active-site Nucleophile is C104. Active-site residues include H238 and E240.

As to quaternary structure, part of the FGAM synthase complex composed of 1 PurL, 1 PurQ and 2 PurS subunits.

It localises to the cytoplasm. It carries out the reaction N(2)-formyl-N(1)-(5-phospho-beta-D-ribosyl)glycinamide + L-glutamine + ATP + H2O = 2-formamido-N(1)-(5-O-phospho-beta-D-ribosyl)acetamidine + L-glutamate + ADP + phosphate + H(+). The enzyme catalyses L-glutamine + H2O = L-glutamate + NH4(+). It functions in the pathway purine metabolism; IMP biosynthesis via de novo pathway; 5-amino-1-(5-phospho-D-ribosyl)imidazole from N(2)-formyl-N(1)-(5-phospho-D-ribosyl)glycinamide: step 1/2. Part of the phosphoribosylformylglycinamidine synthase complex involved in the purines biosynthetic pathway. Catalyzes the ATP-dependent conversion of formylglycinamide ribonucleotide (FGAR) and glutamine to yield formylglycinamidine ribonucleotide (FGAM) and glutamate. The FGAM synthase complex is composed of three subunits. PurQ produces an ammonia molecule by converting glutamine to glutamate. PurL transfers the ammonia molecule to FGAR to form FGAM in an ATP-dependent manner. PurS interacts with PurQ and PurL and is thought to assist in the transfer of the ammonia molecule from PurQ to PurL. This chain is Phosphoribosylformylglycinamidine synthase subunit PurQ, found in Archaeoglobus fulgidus (strain ATCC 49558 / DSM 4304 / JCM 9628 / NBRC 100126 / VC-16).